The following is a 666-amino-acid chain: Fructose-1,6-bisphosphatase class 3 (666 aa).

Belongs to the FBPase class 3 family. Mn(2+) is required as a cofactor.

It catalyses the reaction beta-D-fructose 1,6-bisphosphate + H2O = beta-D-fructose 6-phosphate + phosphate. Its pathway is carbohydrate biosynthesis; gluconeogenesis. In Parabacteroides distasonis (strain ATCC 8503 / DSM 20701 / CIP 104284 / JCM 5825 / NCTC 11152), this protein is Fructose-1,6-bisphosphatase class 3.